We begin with the raw amino-acid sequence, 137 residues long: SPbeta prophage-derived disulfide bond formation protein A (137 aa).

Residues 1–25 (MKKWIVLFLVLIAAAISIFVYVSTG) form the signal peptide. A Thioredoxin domain is found at 26 to 136 (SEKPFYNDIN…IEKFFDKNGD (111 aa)). An intrachain disulfide couples cysteine 58 to cysteine 61.

It belongs to the thioredoxin family.

It is found in the secreted. In terms of biological role, unknown; dispensable for production of the lantibiotic sublancin 168 and for competence for DNA uptake. The polypeptide is SPbeta prophage-derived disulfide bond formation protein A (bdbA) (Bacillus subtilis (strain 168)).